The following is a 492-amino-acid chain: 3,6-anhydro-alpha-L-galactose dehydrogenase (492 aa).

NADP(+) is bound by residues 160–161 (WN), 184–187 (KPSE), and 237–238 (GS). Glu259 functions as the Proton acceptor in the catalytic mechanism. Leu260 is an NADP(+) binding site. Cys293 serves as the catalytic Nucleophile. Glu394 is an NADP(+) binding site.

Belongs to the aldehyde dehydrogenase family.

The catalysed reaction is 3,6-anhydro-alpha-L-galactopyranose + NADP(+) + H2O = 3,6-anhydro-L-galactonate + NADPH + 2 H(+). Its activity is regulated as follows. Significantly inhibited by EDTA. Activity is enhanced by Fe(2+), but is strongly inhibited by Mn(2+), Cu(2+), Zn(2+), Ni(2+) and Co(2+). Functionally, involved in the degradation of 3,6-anhydro-L-galactose, which is the major monomeric sugar of red macroalgae. Catalyzes the oxidation of 3,6-anhydro-L-galactose (AHG) to form 3,6-anhydrogalactonate (AHGA). Shows broad substrate specificity, with maximum activity toward AHG. The enzyme activities toward D-fructose, D-galactose and D-ribose are between 40% and 50% of the maximum, but those toward L-rhamnose, L-glyceraldehyde, D-glyceraldehyde, L-fucose and D-glucose are much lower. This Streptomyces coelicolor (strain ATCC BAA-471 / A3(2) / M145) protein is 3,6-anhydro-alpha-L-galactose dehydrogenase.